The primary structure comprises 495 residues: UDP-N-acetylmuramoyl-L-alanyl-D-glutamate--2,6-diaminopimelate ligase (495 aa).

Residue Ser29 participates in UDP-N-acetyl-alpha-D-muramoyl-L-alanyl-D-glutamate binding. 111–117 contacts ATP; the sequence is GTNGKTS. UDP-N-acetyl-alpha-D-muramoyl-L-alanyl-D-glutamate is bound by residues 153 to 154, Ser180, Gln186, and Arg188; that span reads TT. At Lys220 the chain carries N6-carboxylysine. Meso-2,6-diaminopimelate is bound by residues Arg384, 408–411, Gly459, and Glu463; that span reads DNPR. Positions 408-411 match the Meso-diaminopimelate recognition motif motif; the sequence is DNPR.

Belongs to the MurCDEF family. MurE subfamily. Requires Mg(2+) as cofactor. Carboxylation is probably crucial for Mg(2+) binding and, consequently, for the gamma-phosphate positioning of ATP.

The protein resides in the cytoplasm. It catalyses the reaction UDP-N-acetyl-alpha-D-muramoyl-L-alanyl-D-glutamate + meso-2,6-diaminopimelate + ATP = UDP-N-acetyl-alpha-D-muramoyl-L-alanyl-gamma-D-glutamyl-meso-2,6-diaminopimelate + ADP + phosphate + H(+). It participates in cell wall biogenesis; peptidoglycan biosynthesis. Functionally, catalyzes the addition of meso-diaminopimelic acid to the nucleotide precursor UDP-N-acetylmuramoyl-L-alanyl-D-glutamate (UMAG) in the biosynthesis of bacterial cell-wall peptidoglycan. In Xylella fastidiosa (strain 9a5c), this protein is UDP-N-acetylmuramoyl-L-alanyl-D-glutamate--2,6-diaminopimelate ligase.